The primary structure comprises 374 residues: Chaperone protein DnaJ (374 aa).

Positions 5-70 (DYYKLLGVDR…EKRAGYDRYG (66 aa)) constitute a J domain. The CR-type zinc-finger motif lies at 136–214 (GIQAPIHYVT…CNGSGRRRDE (79 aa)). C149, C152, C166, C169, C188, C191, C202, and C205 together coordinate Zn(2+). CXXCXGXG motif repeat units lie at residues 149–156 (CDMCQGRG), 166–173 (CHTCQGSG), 188–195 (CTTCYGEG), and 202–209 (CKKCNGSG).

Belongs to the DnaJ family. As to quaternary structure, homodimer. It depends on Zn(2+) as a cofactor.

The protein localises to the cytoplasm. Participates actively in the response to hyperosmotic and heat shock by preventing the aggregation of stress-denatured proteins and by disaggregating proteins, also in an autonomous, DnaK-independent fashion. Unfolded proteins bind initially to DnaJ; upon interaction with the DnaJ-bound protein, DnaK hydrolyzes its bound ATP, resulting in the formation of a stable complex. GrpE releases ADP from DnaK; ATP binding to DnaK triggers the release of the substrate protein, thus completing the reaction cycle. Several rounds of ATP-dependent interactions between DnaJ, DnaK and GrpE are required for fully efficient folding. Also involved, together with DnaK and GrpE, in the DNA replication of plasmids through activation of initiation proteins. This is Chaperone protein DnaJ from Wolbachia sp. subsp. Brugia malayi (strain TRS).